Consider the following 316-residue polypeptide: Ribosomal RNA small subunit methyltransferase H (316 aa).

S-adenosyl-L-methionine is bound by residues 35–37, Asp-55, Phe-79, Asp-101, and Gln-108; that span reads GGH.

The protein belongs to the methyltransferase superfamily. RsmH family.

The protein localises to the cytoplasm. It carries out the reaction cytidine(1402) in 16S rRNA + S-adenosyl-L-methionine = N(4)-methylcytidine(1402) in 16S rRNA + S-adenosyl-L-homocysteine + H(+). Functionally, specifically methylates the N4 position of cytidine in position 1402 (C1402) of 16S rRNA. This chain is Ribosomal RNA small subunit methyltransferase H, found in Aliivibrio salmonicida (strain LFI1238) (Vibrio salmonicida (strain LFI1238)).